The primary structure comprises 446 residues: Glucarate dehydratase (446 aa).

Positions 32, 103, 150, and 205 each coordinate substrate. The active-site Proton acceptor is lysine 207. Positions 235, 266, and 289 each coordinate Mg(2+). Substrate is bound at residue 235–237 (DPN). Substrate-binding positions include asparagine 289, 339–341 (HSN), histidine 368, and arginine 422. Catalysis depends on histidine 339, which acts as the Proton acceptor.

The protein belongs to the mandelate racemase/muconate lactonizing enzyme family. GlucD subfamily. Homodimer. The cofactor is Mg(2+).

The enzyme catalyses D-glucarate = 5-dehydro-4-deoxy-D-glucarate + H2O. It functions in the pathway carbohydrate acid metabolism; D-glucarate degradation; 2,5-dioxopentanoate from D-glucarate: step 1/2. Functionally, catalyzes the dehydration of glucarate to 5-keto-4-deoxy-D-glucarate (5-kdGluc). Also acts on L-idarate. The polypeptide is Glucarate dehydratase (gudD) (Escherichia coli O157:H7).